The chain runs to 101 residues: Cilia- and flagella-associated protein 141 (101 aa).

In terms of assembly, microtubule inner protein component of sperm flagellar doublet microtubules. As to expression, expressed in airway epithelial cells.

It localises to the cytoplasm. The protein resides in the cytoskeleton. Its subcellular location is the cilium axoneme. The protein localises to the flagellum axoneme. In terms of biological role, microtubule inner protein (MIP) part of the dynein-decorated doublet microtubules (DMTs) in cilia axoneme, which is required for motile cilia beating. The polypeptide is Cilia- and flagella-associated protein 141 (Homo sapiens (Human)).